Here is a 142-residue protein sequence, read N- to C-terminus: Putative pre-16S rRNA nuclease (142 aa).

This sequence belongs to the YqgF nuclease family.

The protein localises to the cytoplasm. Its function is as follows. Could be a nuclease involved in processing of the 5'-end of pre-16S rRNA. The protein is Putative pre-16S rRNA nuclease of Chlorobaculum tepidum (strain ATCC 49652 / DSM 12025 / NBRC 103806 / TLS) (Chlorobium tepidum).